Reading from the N-terminus, the 166-residue chain is Lipoprotein signal peptidase (166 aa).

Transmembrane regions (helical) follow at residues Trp12–Gln32, Trp70–Ser90, and Ala102–Val122. Catalysis depends on residues Asp123 and Asp141. Residues Phe137–Leu157 traverse the membrane as a helical segment.

It belongs to the peptidase A8 family.

Its subcellular location is the cell inner membrane. It catalyses the reaction Release of signal peptides from bacterial membrane prolipoproteins. Hydrolyzes -Xaa-Yaa-Zaa-|-(S,diacylglyceryl)Cys-, in which Xaa is hydrophobic (preferably Leu), and Yaa (Ala or Ser) and Zaa (Gly or Ala) have small, neutral side chains.. Its pathway is protein modification; lipoprotein biosynthesis (signal peptide cleavage). This protein specifically catalyzes the removal of signal peptides from prolipoproteins. This chain is Lipoprotein signal peptidase, found in Salmonella agona (strain SL483).